The following is a 220-amino-acid chain: Probable nicotinate-nucleotide adenylyltransferase (220 aa).

It belongs to the NadD family.

It carries out the reaction nicotinate beta-D-ribonucleotide + ATP + H(+) = deamido-NAD(+) + diphosphate. It functions in the pathway cofactor biosynthesis; NAD(+) biosynthesis; deamido-NAD(+) from nicotinate D-ribonucleotide: step 1/1. Its function is as follows. Catalyzes the reversible adenylation of nicotinate mononucleotide (NaMN) to nicotinic acid adenine dinucleotide (NaAD). The polypeptide is Probable nicotinate-nucleotide adenylyltransferase (Yersinia pseudotuberculosis serotype O:1b (strain IP 31758)).